Here is a 324-residue protein sequence, read N- to C-terminus: uncharacterized protein (324 aa).

This is an uncharacterized protein from Methanocaldococcus jannaschii (strain ATCC 43067 / DSM 2661 / JAL-1 / JCM 10045 / NBRC 100440) (Methanococcus jannaschii).